The chain runs to 58 residues: Ribosome modulation factor (58 aa).

The interval 1-28 (MKRQKRDRFERAHTQGFKAGLHGRSKDN) is disordered.

The protein belongs to the ribosome modulation factor family.

It is found in the cytoplasm. Functionally, during stationary phase, converts 70S ribosomes to an inactive dimeric form (100S ribosomes). The protein is Ribosome modulation factor of Idiomarina loihiensis (strain ATCC BAA-735 / DSM 15497 / L2-TR).